A 69-amino-acid chain; its full sequence is Probable rubredoxin HupI (69 aa).

A Rubredoxin-like domain is found at 16 to 67 (VTRLECGICWTVYDPADGDDVAQIAPGTPFAALPEEWHCPNCDAPKSKFMAI). Fe cation is bound by residues cysteine 21, cysteine 24, cysteine 54, and cysteine 57.

This sequence belongs to the rubredoxin family. Fe(3+) serves as cofactor.

Functionally, could be an electron transport intermediate in hydrogen oxidation. In Bradyrhizobium diazoefficiens (strain JCM 10833 / BCRC 13528 / IAM 13628 / NBRC 14792 / USDA 110), this protein is Probable rubredoxin HupI (hupI).